A 338-amino-acid chain; its full sequence is uncharacterized protein (338 aa).

A run of 6 helical transmembrane segments spans residues 13–33 (PAYSHVLIAGGIGGATADFLM), 71–91 (GLYSGVCPMLIGSLPATALFF), 110–130 (TLCFLLAGFVGDLFASVVYVP), 176–196 (YGYRATILRDIPFSGFQLLFY), 218–238 (LITGSLAGAGAGFLTTPLDVA), and 301–321 (FRGFGPRIFWTSSQSSLMFVF). Solcar repeat units lie at residues 13–100 (PAYS…TKRH), 108–202 (PETL…LRQV), and 216–328 (RELI…IIRL).

This sequence belongs to the mitochondrial carrier (TC 2.A.29) family.

The protein localises to the mitochondrion inner membrane. In terms of biological role, mitochondrial solute carriers shuttle metabolites, nucleotides, and cofactors through the mitochondrial inner membrane. This is an uncharacterized protein from Schizosaccharomyces pombe (strain 972 / ATCC 24843) (Fission yeast).